Here is a 3779-residue protein sequence, read N- to C-terminus: Protein DDB_G0268328 (3779 aa).

12 disordered regions span residues 24 to 56 (RQIK…KDGS), 1001 to 1028 (HEDE…DDDD), 1137 to 1165 (QDST…QQQQ), 1513 to 1538 (PTNS…SLLS), 1656 to 1690 (ETTV…NNKE), 2027 to 2054 (SNSS…DSNN), 2144 to 2184 (NNNN…NNSS), 2280 to 2325 (ISTT…NEQQ), 2508 to 2527 (QINN…REEG), 2720 to 2748 (DGNN…NDSS), 2975 to 3030 (ESND…DSIK), and 3427 to 3450 (QSNT…SGKL). Low complexity-rich tracts occupy residues 26-56 (IKSQ…KDGS), 1011-1020 (DNSNNSNSQD), 1149-1165 (YYHQ…QQQQ), and 1515-1538 (NSIY…SLLS). The span at 1656–1671 (ETTVLEKETKETKDNN) shows a compositional bias: basic and acidic residues. Over residues 1672-1687 (LENNNNNTNNSNNNNN) the composition is skewed to low complexity. Low complexity-rich tracts occupy residues 2144–2182 (NNNN…NNNN) and 2285–2322 (NNNN…NNNN). 2 stretches are compositionally biased toward low complexity: residues 2722-2745 (NNNN…QNNN) and 3015-3030 (SVNN…DSIK). The segment covering 3433–3446 (GTGGGGGNGGGNNG) has biased composition (gly residues).

In Dictyostelium discoideum (Social amoeba), this protein is Protein DDB_G0268328.